Consider the following 806-residue polypeptide: Disintegrin and metalloproteinase domain-containing protein 1b (806 aa).

Positions 1–33 are cleaved as a signal peptide; the sequence is MERLKLGKIPEHWCIRLVAMLLLAIIFLPSTFC. A disordered region spans residues 169-188; it reads CSVTPKDSPGDTSHPPRSRK. Residues 203–397 enclose the Peptidase M12B domain; the sequence is KYVEMFVVVN…HRGVCLLDEP (195 aa). N-linked (GlcNAc...) asparagine glycosylation is present at Asn-224. Cystine bridges form between Cys-313–Cys-392, Cys-353–Cys-376, Cys-355–Cys-361, Cys-462–Cys-482, Cys-635–Cys-647, Cys-641–Cys-653, and Cys-655–Cys-664. His-338 is a Zn(2+) binding site. Residue Glu-339 is part of the active site. Residues His-342 and His-348 each coordinate Zn(2+). Residues Asn-375 and Asn-476 are each glycosylated (N-linked (GlcNAc...) asparagine). The 85-residue stretch at 406–490 folds into the Disintegrin domain; the sequence is AANCGNGVVE…ACPSDRKAQD (85 aa). Residues 631–665 enclose the EGF-like domain; that stretch reads FSFPCSPSKQCNKHGVCNDLGNCHCSFGFAPPDCK. The disordered stretch occupies residues 668 to 694; the sequence is GTGGSVDSGPAVNLSNDSSPGPNSTQS. 3 N-linked (GlcNAc...) asparagine glycosylation sites follow: Asn-680, Asn-683, and Asn-690. Residues 680-694 show a composition bias toward polar residues; the sequence is NLSNDSSPGPNSTQS. Residues 705–725 form a helical membrane-spanning segment; the sequence is LIVLAVILVLMILLIIICIIS. Residues 726 to 806 are Cytoplasmic-facing; the sequence is AYTKSETASE…KDEDEEEGEE (81 aa). The interval 735–806 is disordered; it reads EAGPSELEEL…KDEDEEEGEE (72 aa). Positions 740-806 are enriched in acidic residues; sequence ELEELPEGEK…KDEDEEEGEE (67 aa).

Heterodimer with ADAM2/fertilin subunit beta. As to expression, testis.

Its subcellular location is the membrane. Functionally, may play a role in spermatogenesis and sperm maturation. This chain is Disintegrin and metalloproteinase domain-containing protein 1b (Adam1b), found in Mus musculus (Mouse).